A 356-amino-acid polypeptide reads, in one-letter code: Cyclin-D1-binding protein 1 (356 aa).

The residue at position 2 (A2) is an N-acetylalanine. 2 interaction with TCF3 regions span residues 2-181 (ASST…VDFV) and 147-356 (ISCN…AAEL). The interaction with RPLP0 stretch occupies residues 2–187 (ASSTAAVPFL…VDFVKDAHEE (186 aa)). Positions 2 to 205 (ASSTAAVPFL…DPYSGLLNDS (204 aa)) are required for interaction with CCND1. The interval 198 to 224 (YSGLLNDSEDNSDSHSDEDGVLGLPSN) is disordered. An interaction with RPLP0 region spans residues 236-356 (LIIPCLALVR…KALTQRAAEL (121 aa)).

This sequence belongs to the CCNDBP1 family. Interacts with CCND1 and GRAP2. May also interact with COPS5, RPLP0, SIRT6, SYF2 and TCF3. In terms of processing, phosphorylated. As to expression, expressed at high levels in brain, intestine, muscle and ovary and at lower levels in heart, kidney, liver, lung, spleen and testis.

It is found in the cytoplasm. The protein resides in the nucleus. Functionally, may negatively regulate cell cycle progression. May act at least in part via inhibition of the cyclin-D1/CDK4 complex, thereby preventing phosphorylation of RB1 and blocking E2F-dependent transcription. May be required for hepatocyte proliferation. This Mus musculus (Mouse) protein is Cyclin-D1-binding protein 1 (Ccndbp1).